The sequence spans 140 residues: Large ribosomal subunit protein uL16c (140 aa).

Belongs to the universal ribosomal protein uL16 family. As to quaternary structure, part of the 50S ribosomal subunit.

The protein resides in the plastid. Its subcellular location is the chloroplast. In Psilotum nudum (Whisk fern), this protein is Large ribosomal subunit protein uL16c.